Consider the following 358-residue polypeptide: Stearoyl-CoA desaturase 2 (358 aa).

The Cytoplasmic segment spans residues 1 to 71 (MPAHILQEIS…EGPPPKLEYV (71 aa)). A disordered region spans residues 14 to 43 (SATTTITAPPSGGQQNGGEKFEKNPHHWGA). Positions 32–43 (EKFEKNPHHWGA) are enriched in basic and acidic residues. A helical membrane pass occupies residues 72-92 (WRNIVLMALLHIGALYGITLV). Position 74 (Asn-74) interacts with substrate. Over 93–96 (PSCK) the chain is Lumenal. A helical membrane pass occupies residues 97–117 (VYTCLFAYLYYVISALGITAG). Over 118 to 216 (AHRLWSHRTY…EKLVMFQRRY (99 aa)) the chain is Cytoplasmic. Fe cation contacts are provided by His-119 and His-124. The Histidine box-1 motif lies at 119-124 (HRLWSH). Residues Asn-147, Arg-154, and Asp-155 each contribute to the substrate site. Fe cation-binding residues include His-156, His-159, and His-160. Residues 156–160 (HRAHH) carry the Histidine box-2 motif. Positions 187 and 188 each coordinate substrate. The helical transmembrane segment at 217 to 236 (YKPGLLLMCFILPTLVPWYC) threads the bilayer. Residues 237 to 240 (WGET) lie on the Lumenal side of the membrane. The helical transmembrane segment at 241 to 262 (FVNSLCVSTFLRYAVVLNATWL) threads the bilayer. Trp-261 is a substrate binding site. Topologically, residues 263–358 (VNSAAHLYGY…RTGEESCKSG (96 aa)) are cytoplasmic. Fe cation is bound by residues His-268, His-297, His-300, and His-301. The Histidine box-3 motif lies at 297-301 (HNYHH).

It belongs to the fatty acid desaturase type 1 family. Requires Fe(2+) as cofactor. As to expression, detected in brain and adipose tissue, and at much lower levels in testis. Detected in liver when rats are kept on a fat-free diet, but not when their food contains unsaturated fatty acids.

The protein resides in the endoplasmic reticulum membrane. It localises to the microsome membrane. The enzyme catalyses octadecanoyl-CoA + 2 Fe(II)-[cytochrome b5] + O2 + 2 H(+) = (9Z)-octadecenoyl-CoA + 2 Fe(III)-[cytochrome b5] + 2 H2O. It carries out the reaction hexadecanoyl-CoA + 2 Fe(II)-[cytochrome b5] + O2 + 2 H(+) = (9Z)-hexadecenoyl-CoA + 2 Fe(III)-[cytochrome b5] + 2 H2O. Functionally, stearoyl-CoA desaturase that utilizes O(2) and electrons from reduced cytochrome b5 to introduce the first double bond into saturated fatty acyl-CoA substrates. Catalyzes the insertion of a cis double bond at the delta-9 position into fatty acyl-CoA substrates including palmitoyl-CoA and stearoyl-CoA. Gives rise to a mixture of 16:1 and 18:1 unsaturated fatty acids. Contributes to the biosynthesis of membrane phospholipids, cholesterol esters and triglycerides, especially during embryonic development and in neonates. Important for normal permeability barrier function of the skin in neonates. This chain is Stearoyl-CoA desaturase 2 (Scd2), found in Rattus norvegicus (Rat).